The sequence spans 387 residues: DNA primase small subunit PriS (387 aa).

Residues aspartate 98, aspartate 100, and aspartate 289 contribute to the active site.

The protein belongs to the eukaryotic-type primase small subunit family. As to quaternary structure, heterodimer of a small subunit (PriS) and a large subunit (PriL). The cofactor is Mg(2+). Requires Mn(2+) as cofactor.

In terms of biological role, catalytic subunit of DNA primase, an RNA polymerase that catalyzes the synthesis of short RNA molecules used as primers for DNA polymerase during DNA replication. The small subunit contains the primase catalytic core and has DNA synthesis activity on its own. Binding to the large subunit stabilizes and modulates the activity, increasing the rate of DNA synthesis while decreasing the length of the DNA fragments, and conferring RNA synthesis capability. The DNA polymerase activity may enable DNA primase to also catalyze primer extension after primer synthesis. May also play a role in DNA repair. This chain is DNA primase small subunit PriS, found in Halorubrum lacusprofundi (strain ATCC 49239 / DSM 5036 / JCM 8891 / ACAM 34).